Consider the following 206-residue polypeptide: Cell division protein SepF (206 aa).

A compositionally biased stretch (basic and acidic residues) spans 31-53; that stretch reads EEKERRKTERQEQRQAVKQEKRT. Positions 31–81 are disordered; sequence EEKERRKTERQEQRQAVKQEKRTFPSQRPAFSEEAPTSSSSKLSAASGSSD. The span at 60–80 shows a compositional bias: low complexity; it reads AFSEEAPTSSSSKLSAASGSS.

The protein belongs to the SepF family. In terms of assembly, homodimer. Interacts with FtsZ.

The protein resides in the cytoplasm. Functionally, cell division protein that is part of the divisome complex and is recruited early to the Z-ring. Probably stimulates Z-ring formation, perhaps through the cross-linking of FtsZ protofilaments. Its function overlaps with FtsA. This Lachnoclostridium phytofermentans (strain ATCC 700394 / DSM 18823 / ISDg) (Clostridium phytofermentans) protein is Cell division protein SepF.